The primary structure comprises 80 residues: Polcalcin Cyn d 7 (80 aa).

EF-hand domains lie at Ala2–Thr37 and Asp40–Leu72. Positions 15, 17, 19, 21, 26, 50, 52, 54, and 61 each coordinate Ca(2+).

This Cynodon dactylon (Bermuda grass) protein is Polcalcin Cyn d 7.